Consider the following 675-residue polypeptide: Glycerophosphocholine phosphodiesterase GPCPD1 (675 aa).

The CBM20 domain occupies 1 to 115; the sequence is MTPSQVTFEI…IIIDDGQFGI (115 aa). Substrate contacts are provided by residues arginine 70 and 88–89; that span reads HK. Phosphoserine is present on residues serine 178 and serine 427. The GP-PDE domain occupies 321 to 621; sequence PLDVGHRGAG…DRIYDWMPEQ (301 aa). Tyrosine 611 carries the phosphotyrosine modification.

It belongs to the glycerophosphoryl diester phosphodiesterase family. In terms of tissue distribution, widely expressed with highest levels in skeletal muscle and heart.

Its subcellular location is the cytoplasm. It localises to the cytosol. It catalyses the reaction sn-glycerol 3-phosphocholine + H2O = sn-glycerol 3-phosphate + choline + H(+). May be involved in the negative regulation of skeletal muscle differentiation, independently of its glycerophosphocholine phosphodiesterase activity. This chain is Glycerophosphocholine phosphodiesterase GPCPD1 (Gpcpd1), found in Mus musculus (Mouse).